The primary structure comprises 698 residues: Methionine--tRNA ligase (698 aa).

Residues 21-31 (PYANGPLHFGH) carry the 'HIGH' region motif. Residues C153, C156, C166, and C169 each contribute to the Zn(2+) site. A 'KMSKS' region motif is present at residues 341 to 345 (QFSKS). K344 is an ATP binding site. Residues 599-698 (DFRKLDLRVG…EDVAPGSLVS (100 aa)) enclose the tRNA-binding domain.

It belongs to the class-I aminoacyl-tRNA synthetase family. MetG type 1 subfamily. Homodimer. Zn(2+) serves as cofactor.

It is found in the cytoplasm. It carries out the reaction tRNA(Met) + L-methionine + ATP = L-methionyl-tRNA(Met) + AMP + diphosphate. Its function is as follows. Is required not only for elongation of protein synthesis but also for the initiation of all mRNA translation through initiator tRNA(fMet) aminoacylation. The polypeptide is Methionine--tRNA ligase (Protochlamydia amoebophila (strain UWE25)).